The chain runs to 425 residues: Dipeptidase tcpJ (425 aa).

Zn(2+) is bound by residues histidine 46, aspartate 48, and glutamate 158. Substrate is bound by residues histidine 185, arginine 259, and aspartate 318.

It belongs to the metallo-dependent hydrolases superfamily. Peptidase M19 family. The cofactor is Zn(2+).

The catalysed reaction is an L-aminoacyl-L-amino acid + H2O = 2 an L-alpha-amino acid. Dipeptidase; part of the gene cluster that mediates the biosynthesis of an unusual class of epipolythiodioxopiperazines (ETPs) lacking the reactive thiol group important for toxicity. Firstly, L-tyrosine is prenylated by tcpD, before undergoing condensation with L-glycine in a reaction catalyzed by the NRPS tcpP leading to the diketopiperazine (DKP) backbone. Afterwards the alpha-carbon of tyrosine is oxidized by the cytochrome P450 tcpC to form a hydroxyl group. However, in contrast other ETP biosynthesis pathways studied so far, tcpC is not able to bishydroxylate the DKP at both alpha-carbon positions, but hydroxylates the alpha-carbon of the tyrosine part and the nitrogen of the glycine part. The next steps involve an alpha,beta-elimination reaction catalyzed by tcpI, a methylation by the methyltransferase tcpN the action of the four enzyme cascade tcpG/K/J/I. Due to a dysfunctional cytochrome P450 monooxygenase tcpC, the pathway leads to the biosynthesis of probable non-toxic metabolites lacking the reactive thiol group. This Claviceps purpurea (strain 20.1) (Ergot fungus) protein is Dipeptidase tcpJ.